The sequence spans 463 residues: Bifunctional protein GlmU (463 aa).

Residues 1–228 (MEQALSIVVL…PAEVQGVNDR (228 aa)) form a pyrophosphorylase region. Residues 10 to 13 (LAAG), lysine 24, glutamine 75, 80 to 81 (GT), 102 to 104 (YGD), glycine 138, glutamate 153, asparagine 168, and asparagine 226 contribute to the UDP-N-acetyl-alpha-D-glucosamine site. Mg(2+) is bound at residue aspartate 104. Position 226 (asparagine 226) interacts with Mg(2+). A linker region spans residues 229 to 249 (VQLAAAERVWQRRQAEDWMRA). The interval 250 to 463 (GVTILDPDRF…RPDRGEGSDA (214 aa)) is N-acetyltransferase. The UDP-N-acetyl-alpha-D-glucosamine site is built by arginine 332 and lysine 350. The active-site Proton acceptor is the histidine 362. The UDP-N-acetyl-alpha-D-glucosamine site is built by tyrosine 365 and asparagine 376. Acetyl-CoA is bound by residues alanine 379, 385–386 (NY), serine 404, alanine 422, and arginine 439. The tract at residues 437–463 (VARSAQRSIHGWRRPGQRPDRGEGSDA) is disordered. Basic and acidic residues predominate over residues 453–463 (QRPDRGEGSDA).

In the N-terminal section; belongs to the N-acetylglucosamine-1-phosphate uridyltransferase family. It in the C-terminal section; belongs to the transferase hexapeptide repeat family. In terms of assembly, homotrimer. Requires Mg(2+) as cofactor.

The protein resides in the cytoplasm. The catalysed reaction is alpha-D-glucosamine 1-phosphate + acetyl-CoA = N-acetyl-alpha-D-glucosamine 1-phosphate + CoA + H(+). It catalyses the reaction N-acetyl-alpha-D-glucosamine 1-phosphate + UTP + H(+) = UDP-N-acetyl-alpha-D-glucosamine + diphosphate. The protein operates within nucleotide-sugar biosynthesis; UDP-N-acetyl-alpha-D-glucosamine biosynthesis; N-acetyl-alpha-D-glucosamine 1-phosphate from alpha-D-glucosamine 6-phosphate (route II): step 2/2. It participates in nucleotide-sugar biosynthesis; UDP-N-acetyl-alpha-D-glucosamine biosynthesis; UDP-N-acetyl-alpha-D-glucosamine from N-acetyl-alpha-D-glucosamine 1-phosphate: step 1/1. It functions in the pathway bacterial outer membrane biogenesis; LPS lipid A biosynthesis. Its function is as follows. Catalyzes the last two sequential reactions in the de novo biosynthetic pathway for UDP-N-acetylglucosamine (UDP-GlcNAc). The C-terminal domain catalyzes the transfer of acetyl group from acetyl coenzyme A to glucosamine-1-phosphate (GlcN-1-P) to produce N-acetylglucosamine-1-phosphate (GlcNAc-1-P), which is converted into UDP-GlcNAc by the transfer of uridine 5-monophosphate (from uridine 5-triphosphate), a reaction catalyzed by the N-terminal domain. The protein is Bifunctional protein GlmU of Alkalilimnicola ehrlichii (strain ATCC BAA-1101 / DSM 17681 / MLHE-1).